The sequence spans 200 residues: 3-isopropylmalate dehydratase small subunit (200 aa).

It belongs to the LeuD family. LeuD type 1 subfamily. As to quaternary structure, heterodimer of LeuC and LeuD.

It carries out the reaction (2R,3S)-3-isopropylmalate = (2S)-2-isopropylmalate. It participates in amino-acid biosynthesis; L-leucine biosynthesis; L-leucine from 3-methyl-2-oxobutanoate: step 2/4. Catalyzes the isomerization between 2-isopropylmalate and 3-isopropylmalate, via the formation of 2-isopropylmaleate. This Yersinia pseudotuberculosis serotype I (strain IP32953) protein is 3-isopropylmalate dehydratase small subunit.